The primary structure comprises 1046 residues: DNA-directed RNA polymerase subunit beta' (1046 aa).

Mg(2+) is bound by residues aspartate 383, aspartate 385, and aspartate 387. Zn(2+) is bound by residues cysteine 752, cysteine 826, cysteine 833, and cysteine 836.

The protein belongs to the RNA polymerase beta' chain family. As to quaternary structure, the RNAP catalytic core consists of 2 alpha, 1 beta, 1 beta' and 1 omega subunit. When a sigma factor is associated with the core the holoenzyme is formed, which can initiate transcription. Mg(2+) serves as cofactor. The cofactor is Zn(2+).

The catalysed reaction is RNA(n) + a ribonucleoside 5'-triphosphate = RNA(n+1) + diphosphate. DNA-dependent RNA polymerase catalyzes the transcription of DNA into RNA using the four ribonucleoside triphosphates as substrates. The protein is DNA-directed RNA polymerase subunit beta' of Weissella hellenica.